Here is a 121-residue protein sequence, read N- to C-terminus: Large ribosomal subunit protein uL18 (121 aa).

Residues 1 to 19 (MASKKVQKIRDKRKARVRA) show a composition bias toward basic residues. A disordered region spans residues 1-23 (MASKKVQKIRDKRKARVRAKISG).

It belongs to the universal ribosomal protein uL18 family. As to quaternary structure, part of the 50S ribosomal subunit; part of the 5S rRNA/L5/L18/L25 subcomplex. Contacts the 5S and 23S rRNAs.

This is one of the proteins that bind and probably mediate the attachment of the 5S RNA into the large ribosomal subunit, where it forms part of the central protuberance. The polypeptide is Large ribosomal subunit protein uL18 (Syntrophus aciditrophicus (strain SB)).